The following is a 619-amino-acid chain: Dihydroxy-acid dehydratase (619 aa).

Mg(2+) is bound at residue D81. C122 is a binding site for [2Fe-2S] cluster. Mg(2+)-binding residues include D123 and K124. An N6-carboxylysine modification is found at K124. C195 contributes to the [2Fe-2S] cluster binding site. E492 is a Mg(2+) binding site. S518 serves as the catalytic Proton acceptor.

Belongs to the IlvD/Edd family. Homodimer. The cofactor is [2Fe-2S] cluster. Mg(2+) is required as a cofactor.

The enzyme catalyses (2R)-2,3-dihydroxy-3-methylbutanoate = 3-methyl-2-oxobutanoate + H2O. It carries out the reaction (2R,3R)-2,3-dihydroxy-3-methylpentanoate = (S)-3-methyl-2-oxopentanoate + H2O. It functions in the pathway amino-acid biosynthesis; L-isoleucine biosynthesis; L-isoleucine from 2-oxobutanoate: step 3/4. It participates in amino-acid biosynthesis; L-valine biosynthesis; L-valine from pyruvate: step 3/4. Functions in the biosynthesis of branched-chain amino acids. Catalyzes the dehydration of (2R,3R)-2,3-dihydroxy-3-methylpentanoate (2,3-dihydroxy-3-methylvalerate) into 2-oxo-3-methylpentanoate (2-oxo-3-methylvalerate) and of (2R)-2,3-dihydroxy-3-methylbutanoate (2,3-dihydroxyisovalerate) into 2-oxo-3-methylbutanoate (2-oxoisovalerate), the penultimate precursor to L-isoleucine and L-valine, respectively. The polypeptide is Dihydroxy-acid dehydratase (Synechococcus elongatus (strain ATCC 33912 / PCC 7942 / FACHB-805) (Anacystis nidulans R2)).